The sequence spans 131 residues: Small ribosomal subunit protein uS8 (131 aa).

This sequence belongs to the universal ribosomal protein uS8 family. Part of the 30S ribosomal subunit. Contacts proteins S5 and S12.

One of the primary rRNA binding proteins, it binds directly to 16S rRNA central domain where it helps coordinate assembly of the platform of the 30S subunit. The chain is Small ribosomal subunit protein uS8 from Phocaeicola vulgatus (strain ATCC 8482 / DSM 1447 / JCM 5826 / CCUG 4940 / NBRC 14291 / NCTC 11154) (Bacteroides vulgatus).